The primary structure comprises 68 residues: UPF0291 protein TTE2340 (68 aa).

This sequence belongs to the UPF0291 family.

Its subcellular location is the cytoplasm. The sequence is that of UPF0291 protein TTE2340 from Caldanaerobacter subterraneus subsp. tengcongensis (strain DSM 15242 / JCM 11007 / NBRC 100824 / MB4) (Thermoanaerobacter tengcongensis).